The primary structure comprises 370 residues: Putative FBD-associated F-box protein At1g50980 (370 aa).

The F-box domain occupies 31–77 (IRTISEFPDKVLLKILSLLPSKDVVATGVLSKRWRSLWKDVKTFRTS). Positions 292-343 (LMGNQPDLIPKSLSSHLEILEWRQYNDTAQEREAAKYILANASGLRKATFYT) constitute an FBD domain.

The protein is Putative FBD-associated F-box protein At1g50980 of Arabidopsis thaliana (Mouse-ear cress).